The chain runs to 181 residues: Inner membrane-spanning protein YciB (181 aa).

Helical transmembrane passes span 22–42, 50–70, 80–100, 122–142, and 148–168; these read IYTATGALIIATAIQLVVTYA, MQLITFIMVTVFGGMTIFLHD, IVYCVFAAGLIIAHILGKPVI, WVLFFTVCAIANLYVAFEMPL, and FKVFGLLGLTFLYTLFTGMYV.

It belongs to the YciB family.

Its subcellular location is the cell inner membrane. Functionally, plays a role in cell envelope biogenesis, maintenance of cell envelope integrity and membrane homeostasis. The polypeptide is Inner membrane-spanning protein YciB (Aliivibrio fischeri (strain ATCC 700601 / ES114) (Vibrio fischeri)).